A 548-amino-acid chain; its full sequence is Pentatricopeptide repeat-containing protein At1g62680, mitochondrial (548 aa).

The transit peptide at 1–43 (MQRSIAMTAKRFLHRNLLENGKPRTASSPSFSHCSSCRCWVRA) directs the protein to the mitochondrion. 12 PPR repeats span residues 84–118 (SIVDFNRLLSAIVKLKKYDVVISLGKKMEVLGIRN), 119–153 (DLYTFNIVINCFCCCFQVSLALSILGKMLKLGYEP), 154–188 (DRVTIGSLVNGFCRRNRVSDAVSLVDKMVEIGYKP), 189–223 (DIVAYNAIIDSLCKTKRVNDAFDFFKEIERKGIRP), 224–258 (NVVTYTALVNGLCNSSRWSDAARLLSDMIKKKITP), 259–293 (NVITYSALLDAFVKNGKVLEAKELFEEMVRMSIDP), 294–328 (DIVTYSSLINGLCLHDRIDEANQMFDLMVSKGCLA), 329–363 (DVVSYNTLINGFCKAKRVEDGMKLFREMSQRGLVS), 364–398 (NTVTYNTLIQGFFQAGDVDKAQEFFSQMDFFGISP), 399–433 (DIWTYNILLGGLCDNGELEKALVIFEDMQKREMDL), 434–468 (DIVTYTTVIRGMCKTGKVEEAWSLFCSLSLKGLKP), and 469–503 (DIVTYTTMMSGLCTKGLLHEVEALYTKMKQEGLMK).

The protein belongs to the PPR family. P subfamily.

Its subcellular location is the mitochondrion. This Arabidopsis thaliana (Mouse-ear cress) protein is Pentatricopeptide repeat-containing protein At1g62680, mitochondrial.